A 1155-amino-acid polypeptide reads, in one-letter code: Alpha,alpha-trehalose-phosphate synthase [UDP-forming] 1 (1155 aa).

Residues 56–94 (LQRRRSVSSRGGSLRGSMDSLNDSGQNGAEDVIGVEDEE) form a disordered region. Residues 63-72 (SSRGGSLRGS) show a composition bias toward low complexity.

The protein in the N-terminal section; belongs to the glycosyltransferase 20 family. This sequence in the C-terminal section; belongs to the gob-1 trehalose phosphatase family.

It carries out the reaction D-glucose 6-phosphate + UDP-alpha-D-glucose = alpha,alpha-trehalose 6-phosphate + UDP + H(+). Functionally, catalyzes the production of trehalose from glucose-6-phosphate and UDP-alpha-D-glucose in a 2 step process. This chain is Alpha,alpha-trehalose-phosphate synthase [UDP-forming] 1 (tps-1), found in Aphelenchoides avenae (Mycophagous nematode worm).